The following is a 420-amino-acid chain: Transcriptional adapter 2-beta (420 aa).

The ZZ-type zinc finger occupies leucine 4 to phenylalanine 59. Cysteine 9, cysteine 12, cysteine 23, cysteine 26, cysteine 32, cysteine 35, histidine 45, and histidine 49 together coordinate Zn(2+). An SANT domain is found at glutamate 65–asparagine 118. A disordered region spans residues serine 305–lysine 335.

Interacts with GCN5L2, SMARCA4, SMARCE1 and PAX5. Component of the TFTC-HAT complex.

It localises to the nucleus. In terms of biological role, coactivates PAX5-dependent transcription together with either SMARCA4 or GCN5L2. This Homo sapiens (Human) protein is Transcriptional adapter 2-beta (TADA2B).